The following is a 583-amino-acid chain: Putative ABC transporter ATP-binding protein exp8 (583 aa).

Positions 25 to 308 constitute an ABC transmembrane type-1 domain; that stretch reads TFLALSFLLA…VTQNFSTLQT (284 aa). The next 5 membrane-spanning stretches (helical) occupy residues 26 to 46, 61 to 81, 135 to 155, 159 to 179, and 259 to 279; these read FLAL…PLVA, AVTV…VQYV, MFSG…TTLY, VLDF…FLLV, and LGYA…GITV. Residues 341–574 form the ABC transporter domain; sequence IRFEHVCFSY…GGTYHKMYSL (234 aa). 374–381 is an ATP binding site; sequence GHTGSGKS.

It belongs to the ABC transporter superfamily.

It localises to the cell membrane. This is Putative ABC transporter ATP-binding protein exp8 (exp8) from Streptococcus pneumoniae serotype 4 (strain ATCC BAA-334 / TIGR4).